A 173-amino-acid polypeptide reads, in one-letter code: Placenta-specific protein 1 (173 aa).

A signal peptide spans 1–23; that stretch reads MNLRKFLGGTVLVAFMLFSYSEQ.

It belongs to the PLAC1 family. In terms of tissue distribution, expressed in placenta.

It localises to the secreted. In terms of biological role, may play a role in placental development. The sequence is that of Placenta-specific protein 1 from Mus musculus (Mouse).